The following is a 2768-amino-acid chain: Thyroglobulin (2768 aa).

The signal sequence occupies residues 1–19 (MALVLEIFTLLASICWVSA). At tyrosine 24 the chain carries Iodotyrosine; alternate. The residue at position 24 (tyrosine 24) is a Sulfotyrosine; alternate. A Thyroxine; alternate modification is found at tyrosine 24. A Triiodothyronine; alternate modification is found at tyrosine 24. 4 consecutive Thyroglobulin type-1 domains span residues 31-92 (LRPC…PVAC), 93-160 (LSFC…PKRC), 161-297 (PRSC…RFRC), and 298-358 (PTKC…PPSC). 18 cysteine pairs are disulfide-bonded: cysteine 34–cysteine 52, cysteine 63–cysteine 70, cysteine 72–cysteine 92, cysteine 96–cysteine 120, cysteine 131–cysteine 138, cysteine 140–cysteine 160, cysteine 164–cysteine 183, cysteine 194–cysteine 235, cysteine 237–cysteine 297, cysteine 301–cysteine 319, cysteine 330–cysteine 336, cysteine 338–cysteine 358, cysteine 364–cysteine 620, cysteine 408–cysteine 608, cysteine 631–cysteine 636, cysteine 638–cysteine 658, cysteine 662–cysteine 687, and cysteine 698–cysteine 703. Residue asparagine 76 is glycosylated (N-linked (GlcNAc...) asparagine). The residue at position 108 (tyrosine 108) is an Iodotyrosine. Asparagine 110 carries N-linked (GlcNAc...) asparagine glycosylation. Tyrosine 149 carries the post-translational modification Iodotyrosine; alternate. The residue at position 149 (tyrosine 149) is a Diiodotyrosine; alternate. The N-linked (GlcNAc...) asparagine glycan is linked to asparagine 198. Tyrosine 234 and tyrosine 258 each carry iodotyrosine. N-linked (GlcNAc...) asparagine glycosylation is found at asparagine 484 and asparagine 529. Positions 521-545 (PLSVGLDSNSSTGTPEAAKKDGTMN) are disordered. Thyroglobulin type-1 domains are found at residues 605–658 (SQTC…QPRC), 659–726 (PTDC…PKKC), 727–921 (PTPC…LPTC), 922–1073 (PGSC…IPQC), 1074–1145 (PTTC…SAQC), and 1146–1210 (PSLC…QPAC). Iodotyrosine; alternate is present on tyrosine 704. The residue at position 704 (tyrosine 704) is a Thyroxine; alternate. Position 704 is a triiodothyronine; alternate (tyrosine 704). Tyrosine 704 is subject to Diiodotyrosine; alternate. Intrachain disulfides connect cysteine 705–cysteine 726, cysteine 730–cysteine 763, cysteine 774–cysteine 898, cysteine 900–cysteine 921, cysteine 925–cysteine 1031, cysteine 1042–cysteine 1049, cysteine 1051–cysteine 1073, cysteine 1077–cysteine 1108, cysteine 1126–cysteine 1145, cysteine 1149–cysteine 1169, cysteine 1181–cysteine 1188, cysteine 1190–cysteine 1210, cysteine 1215–cysteine 1264, cysteine 1231–cysteine 1245, cysteine 1306–cysteine 1356, and cysteine 1331–cysteine 1347. N-linked (GlcNAc...) asparagine glycosylation occurs at asparagine 748. An Iodotyrosine modification is found at tyrosine 785. Asparagine 816 carries an N-linked (GlcNAc...) asparagine glycan. Tyrosine 866 is modified (iodotyrosine; alternate). Tyrosine 866 carries the diiodotyrosine; alternate modification. The residue at position 883 (tyrosine 883) is a Diiodotyrosine. Asparagine 947 carries an N-linked (GlcNAc...) asparagine glycan. The residue at position 992 (tyrosine 992) is an Iodotyrosine; alternate. At tyrosine 992 the chain carries Diiodotyrosine; alternate. N-linked (GlcNAc...) asparagine glycosylation is present at asparagine 1220. Tyrosine 1310 is subject to Iodotyrosine. Thyroxine is present on tyrosine 1310. 3 N-linked (GlcNAc...) asparagine glycosylation sites follow: asparagine 1348, asparagine 1349, and asparagine 1365. Intrachain disulfides connect cysteine 1440-cysteine 1459, cysteine 1462-cysteine 1473, cysteine 1476-cysteine 1490, cysteine 1493-cysteine 1510, cysteine 1514-cysteine 1523, cysteine 1543-cysteine 1565, cysteine 1603-cysteine 1627, cysteine 1607-cysteine 1613, and cysteine 1639-cysteine 1662. 3 Type II repeats span residues 1456-1469 (GLGC…SYSQ), 1470-1486 (DEEC…EQAG), and 1487-1503 (SLAC…ISAG). Tyrosine 1467 carries the post-translational modification Iodotyrosine; alternate. Tyrosine 1467 bears the Diiodotyrosine; alternate mark. The region spanning 1511 to 1565 (VTDCQRNEAGLQCDQNGQYRASQKDRGSGKAFCVDGEGRRLPWWETEAPLEDSQC) is the Thyroglobulin type-1 11 domain. One copy of the Type IIIA repeat lies at 1603-1723 (CLTDCTEDEA…GANLTDAHLF (121 aa)). A glycan (N-linked (GlcNAc...) asparagine) is linked at asparagine 1716. 4 cysteine pairs are disulfide-bonded: cysteine 1724-cysteine 1749, cysteine 1728-cysteine 1734, cysteine 1733-cysteine 1835, and cysteine 1760-cysteine 1777. A Type IIIB repeat occupies 1724–1892 (CLLACDRDLC…LFSAQQANLW (169 aa)). Asparagine 1774 and asparagine 1869 each carry an N-linked (GlcNAc...) asparagine glycan. Cystine bridges form between cysteine 1893–cysteine 1919, cysteine 1897–cysteine 1904, cysteine 1928–cysteine 1939, cysteine 1996–cysteine 2024, cysteine 2000–cysteine 2006, cysteine 2005–cysteine 2076, and cysteine 2035–cysteine 2048. One copy of the Type IIIA repeat lies at 1893–1995 (CLSRCVQEHS…EKSISNGFFE (103 aa)). The stretch at 1996 to 2129 (CERRCDADPC…TSNFSAVRDL (134 aa)) is one Type IIIB repeat. Asparagine 2013 carries N-linked (GlcNAc...) asparagine glycosylation. Asparagine 2122 carries an N-linked (GlcNAc...) asparagine glycan. 3 disulfides stabilise this stretch: cysteine 2130–cysteine 2154, cysteine 2134–cysteine 2140, and cysteine 2163–cysteine 2172. The Type IIIA repeat unit spans residues 2130–2187 (CLSECSQHEACLITTLQTQPGAVRCMFYADTQSCTHSLQGQNCRLLLREEATHIYRKP). An Iodotyrosine modification is found at tyrosine 2184. Residues 2188-2768 (GISLLSYEAS…QEPGSKTYSK (581 aa)) are cholinesterase-like (ChEL). Asparagine 2250 carries N-linked (GlcNAc...) asparagine glycosylation. Residues cysteine 2264 and cysteine 2281 are joined by a disulfide bond. Asparagine 2295 is a glycosylation site (N-linked (GlcNAc...) asparagine). A disulfide bond links cysteine 2442 and cysteine 2453. Tyrosine 2540 is modified (iodotyrosine). Residue tyrosine 2573 is modified to Iodotyrosine; alternate. Thyroxine; alternate is present on tyrosine 2573. Residue tyrosine 2573 is modified to Triiodothyronine; alternate. Tyrosine 2573 is modified (diiodotyrosine; alternate). The N-linked (GlcNAc...) asparagine glycan is linked to asparagine 2582. Residues tyrosine 2587 and tyrosine 2617 each carry the iodotyrosine modification. Cysteine 2591 and cysteine 2715 are disulfide-bonded. At tyrosine 2697 the chain carries Diiodotyrosine. A disordered region spans residues 2727–2768 (TSADGAKGGQSAESEEEELTAGSGLREDLLSLQEPGSKTYSK). Serine 2749 carries an O-linked (Xyl...) (chondroitin sulfate) serine glycan. Tyrosine 2766 is modified (iodotyrosine; alternate). At tyrosine 2766 the chain carries Thyroxine; alternate. The residue at position 2766 (tyrosine 2766) is a Triiodothyronine; alternate. Diiodotyrosine; alternate is present on tyrosine 2766.

The protein belongs to the type-B carboxylesterase/lipase family. In terms of assembly, monomer. Homodimer (via ChEL region); occurs in the endoplasmic reticulum and is required for export to the Golgi apparatus. Homooligomer; disulfide-linked; stored in this form in the thyroid follicle lumen. In terms of processing, iodinated on tyrosine residues by TPO. There are 4 pairs of iodinated tyrosines used for coupling: acceptor Tyr-24 is coupled to donor Tyr-149 or Tyr-234, acceptor Tyr-2573 is coupled to donor Tyr-2540, acceptor Tyr-2766 in monomer 1 is coupled to donor Tyr-2766 in monomer 2 and acceptor Tyr-1310 in monomer 1 is coupled to donor Tyr-108 in monomer 2. Sulfated tyrosines are desulfated during iodination. Post-translationally, undergoes sequential proteolysis by cathepsins to release thyroxine (T4) and triiodothyronine (T3) hormones. In the thyroid follicle lumen, cross-linked TG (storage form) is solubilized by limited proteolysis mediated by cathepsins CTSB and/or CTSL. Partially cleaved TG is further processed by CTSK/cathepsin K and/or CTSL resulting in the release of T4. Following endocytosis, further processing occurs leading to the release of T3 and more T4 hormones. As to expression, specifically expressed in the thyroid gland.

The protein localises to the secreted. Acts as a substrate for the production of iodinated thyroid hormones thyroxine (T4) and triiodothyronine (T3). The synthesis of T3 and T4 involves iodination of selected tyrosine residues of TG/thyroglobulin followed by their oxidative coupling in the thyroid follicle lumen. Following TG re-internalization and lysosomal-mediated proteolysis, T3 and T4 are released from the polypeptide backbone leading to their secretion into the bloodstream. One dimer produces 7 thyroid hormone molecules. This is Thyroglobulin from Homo sapiens (Human).